The chain runs to 118 residues: UPF0102 protein CHY_1414 (118 aa).

Belongs to the UPF0102 family.

The protein is UPF0102 protein CHY_1414 of Carboxydothermus hydrogenoformans (strain ATCC BAA-161 / DSM 6008 / Z-2901).